The primary structure comprises 137 residues: Putative pre-16S rRNA nuclease (137 aa).

Belongs to the YqgF nuclease family.

Its subcellular location is the cytoplasm. Functionally, could be a nuclease involved in processing of the 5'-end of pre-16S rRNA. This Clostridium kluyveri (strain NBRC 12016) protein is Putative pre-16S rRNA nuclease.